An 887-amino-acid polypeptide reads, in one-letter code: Alanine--tRNA ligase (887 aa).

4 residues coordinate Zn(2+): His564, His568, Cys676, and His680.

This sequence belongs to the class-II aminoacyl-tRNA synthetase family. Zn(2+) is required as a cofactor.

It is found in the cytoplasm. It catalyses the reaction tRNA(Ala) + L-alanine + ATP = L-alanyl-tRNA(Ala) + AMP + diphosphate. In terms of biological role, catalyzes the attachment of alanine to tRNA(Ala) in a two-step reaction: alanine is first activated by ATP to form Ala-AMP and then transferred to the acceptor end of tRNA(Ala). Also edits incorrectly charged Ser-tRNA(Ala) and Gly-tRNA(Ala) via its editing domain. This chain is Alanine--tRNA ligase, found in Rhizobium meliloti (strain 1021) (Ensifer meliloti).